A 3411-amino-acid chain; its full sequence is Genome polyprotein (3411 aa).

The Cytoplasmic segment spans residues 1–104 (MSGRKAQGKT…LSSRKRRSHD (104 aa)). A hydrophobic; homodimerization of capsid protein C region spans residues 38–72 (PGPSRGVQGFISFFSFNILTGKKITAHLKRLWKML). A propeptide spans 102-121 (SHDVLTVQFLILGMLLMAGG) (ER anchor for the capsid protein C, removed in mature form by serine protease NS3). The helical transmembrane segment at 105 to 125 (VLTVQFLILGMLLMAGGVTLV) threads the bilayer. The Extracellular segment spans residues 126–244 (RKNRWLLLNV…GERQLQKIER (119 aa)). Residues Asn134 and Asn150 are each glycosylated (N-linked (GlcNAc...) asparagine; by host). Residues 245–265 (WLVRNPFFAVTALAIAYLVGS) traverse the membrane as a helical segment. The Cytoplasmic segment spans residues 266–270 (NMTQR). The helical transmembrane segment at 271-285 (VVIALLVLAVGPAYS) threads the bilayer. Topologically, residues 286–730 (AHCIGITDRD…TVFGSAFQGL (445 aa)) are extracellular. Disulfide bonds link Cys288–Cys315, Cys345–Cys401, Cys345–Cys406, Cys359–Cys390, Cys377–Cys401, Cys377–Cys406, Cys467–Cys568, and Cys585–Cys615. The segment at 383-396 (DRGWGNGCGLFGKG) is fusion peptide. The helical transmembrane segment at 731 to 751 (FGGLSWITKVIMGAVLIWVGI) threads the bilayer. Over 752–757 (NTRNMT) the chain is Extracellular. A helical membrane pass occupies residues 758-778 (MSMSMILVGVIMMFLSLGVGA). The Extracellular portion of the chain corresponds to 779–1132 (DQGCAINFGK…LVRSWVTAGE (354 aa)). 6 cysteine pairs are disulfide-bonded: Cys782–Cys793, Cys833–Cys921, Cys957–Cys1002, Cys1058–Cys1107, Cys1069–Cys1091, and Cys1090–Cys1094. Residues Asn908 and Asn986 are each glycosylated (N-linked (GlcNAc...) asparagine; by host). A helical transmembrane segment spans residues 1133–1153 (IHAVPFGLVSMMIAMEVVLRK). The Cytoplasmic portion of the chain corresponds to 1154–1201 (RQGPKQMLVGGMVLLGAMLVGQVTLLDLLKLTMAVGLHFHEMNNGGDA). Residues 1202–1222 (MYMALIAAFSIRPGLLIGFGL) traverse the membrane as a helical segment. The Lumenal segment spans residues 1223–1287 (RTLWSPRERL…ILPLMALLTP (65 aa)). The chain crosses the membrane as a helical span at residues 1288–1308 (VTMAEVRLATMLLCAVVIIGV). Residues 1309–1355 (LHQNSKDTSMQKTIPLVALTLTSYLGLTQPFLGLCAFLATRIFGRRS) lie on the Cytoplasmic side of the membrane. A helical transmembrane segment spans residues 1356-1376 (IPVNEALAAAGLVGVLAGLAF). The Lumenal segment spans residues 1377-1378 (QE). Residues 1379-1399 (MENFLGPIAVGGILMMLVSVA) traverse the membrane as a helical segment. Residues 1400–1456 (GRVDGLELKKLGEVSWEEEAEISGSSARYDVALSEQGEFKLLSEEKVPWDQVVMTSL) are Cytoplasmic-facing. Residues 1407–1446 (LKKLGEVSWEEEAEISGSSARYDVALSEQGEFKLLSEEKV) are interacts with and activates NS3 protease. The helical intramembrane region spans 1457 to 1477 (ALVGAAIHPSALLLVLAGWLF). Residues 1478–2157 (HVKGARRSGD…RNALSMMPEA (680 aa)) are Cytoplasmic-facing. One can recognise a Peptidase S7 domain in the interval 1485 to 1665 (SGDVLWDIPT…EVKEEGKEEL (181 aa)). Catalysis depends on charge relay system; for serine protease NS3 activity residues His1537, Asp1561, and Ser1622. One can recognise a Helicase ATP-binding domain in the interval 1669 to 1825 (PTMLKKGMTT…HSNGEIEDVQ (157 aa)). The interval 1673–1676 (KKGM) is important for RNA-binding. 1682–1689 (YHPGAGKT) contributes to the ATP binding site. Positions 1773–1776 (DEAH) match the DEAH box motif. Positions 1820–1997 (EIEDVQTDIP…VRGGMVAPLY (178 aa)) constitute a Helicase C-terminal domain. Lys1877 is modified (N6-acetyllysine; by host). The helical transmembrane segment at 2158–2178 (MTIVMLFILAGLLTSGMVIFF) threads the bilayer. Residues 2179–2186 (MSPKGISR) are Lumenal-facing. An intramembrane region (helical) is located at residues 2187 to 2207 (MSMAMGTMAGCGYLMFLGGAK). At 2208–2209 (PT) the chain is on the lumenal side. Residues 2210-2230 (HISYIMLIFFVLMVVVIPEPG) form a helical membrane-spanning segment. Over 2231–2241 (QQRSIQDNQVA) the chain is Cytoplasmic. The chain crosses the membrane as a helical span at residues 2242 to 2262 (YLIIGILTLVSVVAANELGML). Over 2263 to 2293 (ERTKEDLFGKKNLIPSSASPWSWPDLDLKPG) the chain is Lumenal. An intramembrane region (helical) is located at residues 2294–2314 (AAWTVYVGIVTILSPMLHHWI). Residues 2315–2360 (KVEYGNLSLSGIAQSASVLSFMDKGIPFMKMNISVIILLVSGWNSI) lie on the Lumenal side of the membrane. A helical transmembrane segment spans residues 2361–2380 (TVMPLLCGIGCAMLHWTLIL). Topologically, residues 2381 to 2421 (PGIKAQQSKLPQRRVFHGVAKNPVVDGNPTVDIEEAPEMPA) are cytoplasmic. A helical transmembrane segment spans residues 2422–2442 (LYEKKLALYLLLALSLASVAM). At 2443–2445 (CRT) the chain is on the lumenal side. A helical membrane pass occupies residues 2446-2466 (PFSLAEGIVLASAALGPLIEG). The Cytoplasmic segment spans residues 2467–3411 (NTSLLWNGPM…DADLQPGELI (945 aa)). The mRNA cap 0-1 NS5-type MT domain maps to 2507–2771 (GRANGKTLGE…DVILPIGTRS (265 aa)). Ser2562 contacts S-adenosyl-L-methionine. At Ser2562 the chain carries Phosphoserine. The active-site For 2'-O-MTase activity is Lys2567. Gly2592, Trp2593, Thr2610, Leu2611, Asp2637, and Ile2638 together coordinate S-adenosyl-L-methionine. Asp2652 serves as the catalytic For 2'-O-MTase activity. Residue Ile2653 participates in S-adenosyl-L-methionine binding. Residues Lys2688 and Glu2724 each act as for 2'-O-MTase activity in the active site. Tyr2726 lines the S-adenosyl-L-methionine pocket. Residues 2878-2911 (RKIMKVVNRWLFRHLAREKNPRLCTKEEFIAKVR) carry the Nuclear localization signal motif. Residues Glu2945, His2949, Cys2954, and Cys2957 each contribute to the Zn(2+) site. One can recognise a RdRp catalytic domain in the interval 3035 to 3187 (GGFYADDTAG…RPIDDRFGMA (153 aa)). 3 residues coordinate Zn(2+): His3222, Cys3238, and Cys3357.

The protein in the N-terminal section; belongs to the class I-like SAM-binding methyltransferase superfamily. mRNA cap 0-1 NS5-type methyltransferase family. Homodimer. Interacts (via N-terminus) with host EXOC1 (via C-terminus); this interaction results in EXOC1 degradation through the proteasome degradation pathway. As to quaternary structure, forms heterodimers with envelope protein E in the endoplasmic reticulum and Golgi. In terms of assembly, homodimer; in the endoplasmic reticulum and Golgi. Interacts with protein prM. Interacts with non-structural protein 1. Homodimer; Homohexamer when secreted. Interacts with envelope protein E. As to quaternary structure, interacts (via N-terminus) with serine protease NS3. In terms of assembly, forms a heterodimer with serine protease NS3. May form homooligomers. Forms a heterodimer with NS2B. Interacts with non-structural protein 2A (via N-terminus). Interacts with NS4B. Interacts with unphosphorylated RNA-directed RNA polymerase NS5; this interaction stimulates RNA-directed RNA polymerase NS5 guanylyltransferase activity. NS3 interacts with host PDCD6IP; this interaction contributes to virion release. As to quaternary structure, interacts with serine protease NS3. In terms of assembly, homodimer. Interacts with host STAT2; this interaction prevents the establishment of cellular antiviral state. Interacts with serine protease NS3. Interacts with host TRIM23; this interaction leads to NS5 ubiquitination. Specific enzymatic cleavages in vivo yield mature proteins. The nascent capsid protein C contains a C-terminal hydrophobic domain that act as a signal sequence for translocation of prM into the lumen of the ER. Mature capsid protein C is cleaved at a site upstream of this hydrophobic domain by NS3. prM is cleaved in post-Golgi vesicles by a host furin, releasing the mature small envelope protein M, and peptide pr. Non-structural protein 2A-alpha, a C-terminally truncated form of non-structural protein 2A, results from partial cleavage by NS3. Specific enzymatic cleavages in vivo yield mature proteins peptide 2K acts as a signal sequence and is removed from the N-terminus of NS4B by the host signal peptidase in the ER lumen. Signal cleavage at the 2K-4B site requires a prior NS3 protease-mediated cleavage at the 4A-2K site. In terms of processing, cleaved in post-Golgi vesicles by a host furin, releasing the mature small envelope protein M, and peptide pr. This cleavage is incomplete as up to 30% of viral particles still carry uncleaved prM. Post-translationally, N-glycosylated. N-glycosylated. The excreted form is glycosylated and this is required for efficient secretion of the protein from infected cells. In terms of processing, polyubiquitinated; ubiquitination is probably mediated by host TRIM23 and is prerequisite for NS5-STAT2 interaction. NS5 is not ISGylated or sumoylated. Post-translationally, acetylated by host KAT5. Acetylation modulates NS3 RNA-binding and unwinding activities and plays an important positive role for viral replication. Phosphorylated on serines residues. This phosphorylation may trigger NS5 nuclear localization.

The protein localises to the virion. Its subcellular location is the host nucleus. It is found in the host cytoplasm. It localises to the host perinuclear region. The protein resides in the secreted. The protein localises to the virion membrane. Its subcellular location is the host endoplasmic reticulum membrane. The catalysed reaction is Selective hydrolysis of -Xaa-Xaa-|-Yaa- bonds in which each of the Xaa can be either Arg or Lys and Yaa can be either Ser or Ala.. It catalyses the reaction RNA(n) + a ribonucleoside 5'-triphosphate = RNA(n+1) + diphosphate. It carries out the reaction a ribonucleoside 5'-triphosphate + H2O = a ribonucleoside 5'-diphosphate + phosphate + H(+). The enzyme catalyses ATP + H2O = ADP + phosphate + H(+). The catalysed reaction is a 5'-end (5'-triphosphoguanosine)-ribonucleoside in mRNA + S-adenosyl-L-methionine = a 5'-end (N(7)-methyl 5'-triphosphoguanosine)-ribonucleoside in mRNA + S-adenosyl-L-homocysteine. It catalyses the reaction a 5'-end (N(7)-methyl 5'-triphosphoguanosine)-ribonucleoside in mRNA + S-adenosyl-L-methionine = a 5'-end (N(7)-methyl 5'-triphosphoguanosine)-(2'-O-methyl-ribonucleoside) in mRNA + S-adenosyl-L-homocysteine + H(+). In terms of biological role, plays a role in virus budding by binding to the cell membrane and gathering the viral RNA into a nucleocapsid that forms the core of a mature virus particle. During virus entry, may induce genome penetration into the host cytoplasm after hemifusion induced by the surface proteins. Can migrate to the cell nucleus where it modulates host functions. Inhibits RNA silencing by interfering with host Dicer. Functionally, prevents premature fusion activity of envelope proteins in trans-Golgi by binding to envelope protein E at pH6.0. After virion release in extracellular space, gets dissociated from E dimers. Its function is as follows. Acts as a chaperone for envelope protein E during intracellular virion assembly by masking and inactivating envelope protein E fusion peptide. prM is the only viral peptide matured by host furin in the trans-Golgi network probably to avoid catastrophic activation of the viral fusion activity in acidic Golgi compartment prior to virion release. prM-E cleavage is inefficient, and many virions are only partially matured. These uncleaved prM would play a role in immune evasion. In terms of biological role, may play a role in virus budding. Exerts cytotoxic effects by activating a mitochondrial apoptotic pathway through M ectodomain. May display a viroporin activity. Binds to host cell surface receptor and mediates fusion between viral and cellular membranes. Envelope protein is synthesized in the endoplasmic reticulum in the form of heterodimer with protein prM. They play a role in virion budding in the ER, and the newly formed immature particle is covered with 60 spikes composed of heterodimer between precursor prM and envelope protein E. The virion is transported to the Golgi apparatus where the low pH causes dissociation of PrM-E heterodimers and formation of E homodimers. prM-E cleavage is inefficient, and many virions are only partially matured. These uncleaved prM would play a role in immune evasion. Functionally, involved in immune evasion, pathogenesis and viral replication. Once cleaved off the polyprotein, is targeted to three destinations: the viral replication cycle, the plasma membrane and the extracellular compartment. Essential for viral replication. Required for formation of the replication complex and recruitment of other non-structural proteins to the ER-derived membrane structures. Excreted as a hexameric lipoparticle that plays a role against host immune response. Antagonizing the complement function. Binds to the host macrophages and dendritic cells. Inhibits signal transduction originating from Toll-like receptor 3 (TLR3). Its function is as follows. Component of the viral RNA replication complex that functions in virion assembly and antagonizes the host immune response. In terms of biological role, required cofactor for the serine protease function of NS3. May have membrane-destabilizing activity and form viroporins. Displays three enzymatic activities: serine protease, NTPase and RNA helicase. NS3 serine protease, in association with NS2B, performs its autocleavage and cleaves the polyprotein at dibasic sites in the cytoplasm: C-prM, NS2A-NS2B, NS2B-NS3, NS3-NS4A, NS4A-2K and NS4B-NS5. NS3 RNA helicase binds RNA and unwinds dsRNA in the 3' to 5' direction. Also plays a role in virus assembly. Functionally, regulates the ATPase activity of the NS3 helicase activity. NS4A allows NS3 helicase to conserve energy during unwinding. Its function is as follows. Functions as a signal peptide for NS4B and is required for the interferon antagonism activity of the latter. In terms of biological role, induces the formation of ER-derived membrane vesicles where the viral replication takes place. Inhibits interferon (IFN)-induced host STAT1 phosphorylation and nuclear translocation, thereby preventing the establishment of cellular antiviral state by blocking the IFN-alpha/beta pathway. Replicates the viral (+) and (-) RNA genome, and performs the capping of genomes in the cytoplasm. NS5 methylates viral RNA cap at guanine N-7 and ribose 2'-O positions. Besides its role in RNA genome replication, also prevents the establishment of cellular antiviral state by blocking the interferon-alpha/beta (IFN-alpha/beta) signaling pathway. IFN-I induces binding of NS5 to host IFN-activated transcription factor STAT2, preventing its transcriptional activity. Host TRIM23 is the E3 ligase that interacts with and polyubiquitinates NS5 to promote its binding to STAT2 and trigger IFN-I signaling inhibition. The protein is Genome polyprotein of Yellow fever virus (isolate Ivory Coast/85-82H/1982) (YFV).